The sequence spans 325 residues: Ribose-phosphate pyrophosphokinase 2 (325 aa).

Residue Arg-96–Asp-101 coordinates ATP. The Mg(2+) site is built by Asp-135, His-137, Asp-146, and Asp-150. His-137 serves as a coordination point for ATP. Residues Lys-219–Gly-234 form a binding of phosphoribosylpyrophosphate region.

This sequence belongs to the ribose-phosphate pyrophosphokinase family. Homodimer. The active form is probably a hexamer composed of 3 homodimers. The cofactor is Mg(2+).

The catalysed reaction is D-ribose 5-phosphate + ATP = 5-phospho-alpha-D-ribose 1-diphosphate + AMP + H(+). Its pathway is metabolic intermediate biosynthesis; 5-phospho-alpha-D-ribose 1-diphosphate biosynthesis; 5-phospho-alpha-D-ribose 1-diphosphate from D-ribose 5-phosphate (route I): step 1/1. With respect to regulation, activated by magnesium and inorganic phosphate. Competitively or non-competitively inhibited by ADP, 2,3-bisphosphoglyceride or GDP. Catalyzes the synthesis of phosphoribosylpyrophosphate (PRPP) that is essential for nucleotide synthesis. In Gallus gallus (Chicken), this protein is Ribose-phosphate pyrophosphokinase 2 (PRPS2).